Reading from the N-terminus, the 395-residue chain is GPI-anchor transamidase (395 aa).

The N-terminal stretch at 1-27 (MAVTDSLSRAATVLATVLLLSFGSVAA) is a signal peptide. Residues 28–368 (SHIEDQAEQF…PKLKDWHPPG (341 aa)) are Lumenal-facing. Ca(2+) is bound by residues Asp79, Ile82, Glu118, and Asp120. Residue His164 is the Proton donor of the active site. Cys206 acts as the Nucleophile; acyl-thioester intermediate in catalysis. Residues Cys206, Ser232, and Ser234 each contribute to the a protein site. Positions 231-236 (DSLSHQ) are autoinhibitory loop. The cysteines at positions 275 and 280 are disulfide-linked. Residues 369-385 (GFILGLWALIIMVFFKT) form a helical membrane-spanning segment. At 386 to 395 (YGIKHMKFIF) the chain is on the cytoplasmic side.

The protein belongs to the peptidase C13 family. As to quaternary structure, heteropentamer. Part of the GPI-anchor transamidase complex, consisting of PIGK, PIGT, PIGS, PIGU and GAA1. Interacts with GPAA1. Interacts with PIGT; this interaction, via a disulfide link, stabilizes the expression of GAA1 and PIGK and links them to PIGS. Post-translationally, the disulfide bond between PIGK/GPI8 and PIGT is important for normal enzyme activity.

It is found in the endoplasmic reticulum membrane. It participates in glycolipid biosynthesis; glycosylphosphatidylinositol-anchor biosynthesis. In the absence of proproteins substrates, exists in an inactive state with a disrupted catalytic site by an autoinhibitory loop. The binding of proprotein substrates, particularly the CSP region, to GPI-T triggers concerted conformational changes that alleviate the inhibition by the autoinhibitory loop. Meanwhile, proprotein residues near the omega- site induce the formation of a catalytic cleft for catalysis, following which the products are released and GPI-T reverts to the inactive state. In terms of biological role, catalytic subunit of the glycosylphosphatidylinositol-anchor (GPI-anchor) transamidase (GPI-T) complex that catalyzes the formation of the linkage between a proprotein and a GPI-anchor and participates in GPI anchored protein biosynthesis. Recognizes diverse proproteins at a C-terminal signal peptide (CSP) region that lacks consensus sequence and replaces it with a GPI-anchor via a transamidation reaction. Transamidation catalysis reaction follows a two-phase mechanism. In the acyl-enzyme phase, the carbonyl group of the proproteins's omega-site undergoes a nucleophilic attack forming an enzyme-substrate thioester bond. Followed by a general acid catalysis that allows CSP releasing, regenerating the carbonyl, and forming the acyl-enzyme intermediate. In the GPI-anchor attachment phase, the amino group of the GPI-anchor's ethanolamine phosphate, the one on third mannose (EtNP3), mediates a nucleophilic attack on the carbonyl of the acyl-enzyme intermediate, replacing the CSP, allowing GPI-anchor attachment to the omega-residue, therefore forming the product and freeing the enzyme. This is GPI-anchor transamidase from Homo sapiens (Human).